Consider the following 599-residue polypeptide: Laccase-2 (599 aa).

Residues 1–19 (MARSTTSLFALSLVASAFA) form the signal peptide. 2 Plastocyanin-like domains span residues 21–145 (VVDY…IVIY) and 157–307 (VDDE…LVYE). Cu cation contacts are provided by H82, H84, H127, and H129. The cysteines at positions 103 and 588 are disulfide-linked. 5 N-linked (GlcNAc...) asparagine glycosylation sites follow: N207, N208, N231, N397, and N443. The Plastocyanin-like 3 domain maps to 450-567 (DVPTLLKILT…EGFAMVFAEA (118 aa)). Cu cation is bound by residues H497, H500, H502, H549, C550, H551, and H555.

It belongs to the multicopper oxidase family. In terms of assembly, homodimer. It depends on Cu cation as a cofactor. In terms of tissue distribution, in mycelia, at a lower level than LCC4.

Its subcellular location is the secreted. The enzyme catalyses 4 hydroquinone + O2 = 4 benzosemiquinone + 2 H2O. Functionally, lignin degradation and detoxification of lignin-derived products. In Thanatephorus cucumeris (Black scurf of potato), this protein is Laccase-2 (LCC2).